A 747-amino-acid polypeptide reads, in one-letter code: AT-rich interactive domain-containing protein 4 (747 aa).

Residues 454-475 (PLPTRKRSEPCRESKEIENGGP) are disordered. Residues 459–471 (KRSEPCRESKEIE) show a composition bias toward basic and acidic residues. The region spanning 566–670 (VCSEEEFLRD…YLLEYEYAHD (105 aa)) is the ARID domain. A PHD-type zinc finger spans residues 674–730 (GECCLICRSSTAGDWVNCGSCGEWAHFGCDRRPGLGAFKDYAKTDGLEYVCPNCSVS).

The protein localises to the nucleus. This is AT-rich interactive domain-containing protein 4 (ARID4) from Arabidopsis thaliana (Mouse-ear cress).